The chain runs to 171 residues: Dual specificity protein phosphatase OPG106 (171 aa).

The protein belongs to the protein-tyrosine phosphatase family. Non-receptor class dual specificity subfamily. Homodimer.

It is found in the virion. The protein localises to the host cytoplasm. It carries out the reaction O-phospho-L-tyrosyl-[protein] + H2O = L-tyrosyl-[protein] + phosphate. It catalyses the reaction O-phospho-L-seryl-[protein] + H2O = L-seryl-[protein] + phosphate. Its function is as follows. Serine/tyrosine phosphatase which down-regulates cellular antiviral response by dephosphorylating activated host STAT1 and blocking interferon (IFN)-stimulated innate immune responses. Dephosphorylates the OPG144 protein. The protein is Dual specificity protein phosphatase OPG106 (OPG106) of Monkeypox virus.